We begin with the raw amino-acid sequence, 191 residues long: Small ribosomal subunit protein eS7 (191 aa).

It belongs to the eukaryotic ribosomal protein eS7 family.

This is Small ribosomal subunit protein eS7 (RPS7) from Hordeum vulgare (Barley).